The primary structure comprises 136 residues: UPF0102 protein BBta_0181 (136 aa).

It belongs to the UPF0102 family.

In Bradyrhizobium sp. (strain BTAi1 / ATCC BAA-1182), this protein is UPF0102 protein BBta_0181.